The following is a 280-amino-acid chain: Coiled-coil domain-containing protein 106 (280 aa).

A coiled-coil region spans residues 63-101; the sequence is TQLHMALERNSWLQKRIEDLEEERDFLRCQLDKFISSAR. Over residues 103–121 the composition is skewed to basic and acidic residues; the sequence is EAEDHCRMKPGPRRMEGDS. Positions 103–176 are disordered; the sequence is EAEDHCRMKP…KPKARERQRV (74 aa). Ser130 is subject to Phosphoserine. Residues 133–146 are compositionally biased toward low complexity; sequence ESAASSLSGASEEG. The short motif at 151-164 is the Bipartite nuclear localization signal element; sequence RRRQKQKGGASRRR. Positions 152-168 are enriched in basic residues; sequence RRQKQKGGASRRRFGKP.

In terms of assembly, interacts with p53/TP53.

Its subcellular location is the nucleus. Promotes the degradation of p53/TP53 protein and inhibits its transactivity. The protein is Coiled-coil domain-containing protein 106 (CCDC106) of Homo sapiens (Human).